The primary structure comprises 1579 residues: DNA-directed RNA polymerase subunit beta' (1579 aa).

Zn(2+) is bound by residues Cys65, Cys67, Cys80, and Cys83. The Mg(2+) site is built by Asp601, Asp603, and Asp605. Zn(2+)-binding residues include Cys938, Cys1012, Cys1019, and Cys1022.

Belongs to the RNA polymerase beta' chain family. The RNAP catalytic core consists of 2 alpha, 1 beta, 1 beta' and 1 omega subunit. When a sigma factor is associated with the core the holoenzyme is formed, which can initiate transcription. It depends on Mg(2+) as a cofactor. Requires Zn(2+) as cofactor.

It carries out the reaction RNA(n) + a ribonucleoside 5'-triphosphate = RNA(n+1) + diphosphate. Functionally, DNA-dependent RNA polymerase catalyzes the transcription of DNA into RNA using the four ribonucleoside triphosphates as substrates. The polypeptide is DNA-directed RNA polymerase subunit beta' (Sulfurihydrogenibium sp. (strain YO3AOP1)).